Here is a 276-residue protein sequence, read N- to C-terminus: 4-diphosphocytidyl-2-C-methyl-D-erythritol kinase (276 aa).

The active site involves K13. 94 to 104 (PHAGGIGGGSA) lines the ATP pocket. D131 is an active-site residue.

The protein belongs to the GHMP kinase family. IspE subfamily.

The catalysed reaction is 4-CDP-2-C-methyl-D-erythritol + ATP = 4-CDP-2-C-methyl-D-erythritol 2-phosphate + ADP + H(+). The protein operates within isoprenoid biosynthesis; isopentenyl diphosphate biosynthesis via DXP pathway; isopentenyl diphosphate from 1-deoxy-D-xylulose 5-phosphate: step 3/6. Catalyzes the phosphorylation of the position 2 hydroxy group of 4-diphosphocytidyl-2C-methyl-D-erythritol. The polypeptide is 4-diphosphocytidyl-2-C-methyl-D-erythritol kinase (Jannaschia sp. (strain CCS1)).